We begin with the raw amino-acid sequence, 114 residues long: Nucleoid-associated protein MAE_23910 (114 aa).

It belongs to the YbaB/EbfC family. In terms of assembly, homodimer.

The protein resides in the cytoplasm. Its subcellular location is the nucleoid. Binds to DNA and alters its conformation. May be involved in regulation of gene expression, nucleoid organization and DNA protection. This Microcystis aeruginosa (strain NIES-843 / IAM M-2473) protein is Nucleoid-associated protein MAE_23910.